A 1138-amino-acid polypeptide reads, in one-letter code: Serine/threonine/tyrosine-interacting-like protein 2 (1138 aa).

A disordered region spans residues 1–20 (MATGGDAEEEQVVPNEEDEA). The Tyrosine-protein phosphatase domain maps to 132 to 280 (NEVDEVWPNV…LRELNEKLME (149 aa)). Phosphoserine is present on serine 291. Disordered regions lie at residues 309-336 (EEED…VTLI), 348-473 (EWRK…TWDM), 486-515 (ARKY…DDEE), 552-575 (KKDS…GEKN), 592-618 (QKKV…AKKR), 660-694 (AAPS…LPNL), 761-800 (SGCL…VRGT), and 850-1117 (FKKK…DEAI). The span at 316–331 (SHLSGSSLGKASQVSK) shows a compositional bias: polar residues. Serine 373 bears the Phosphoserine mark. The segment covering 376–385 (DGDDCEDEDV) has biased composition (acidic residues). The span at 386 to 409 (ERIIQEWQSRNERYQAKGREQWNR) shows a compositional bias: basic and acidic residues. Threonine 427 bears the Phosphothreonine mark. 2 positions are modified to phosphoserine: serine 503 and serine 555. 2 stretches are compositionally biased toward basic and acidic residues: residues 552-567 (KKDS…HGTE) and 595-614 (VGSE…DTVL). The segment covering 672–687 (SVLSTQSHRSHASNMP) has biased composition (polar residues). Residues 773–788 (SSDVQSVLSSTSSLTS) are compositionally biased toward low complexity. Acidic residues predominate over residues 858 to 871 (DEDMSVGDRDEDTD). At serine 862 the chain carries Phosphoserine. The span at 878-897 (RYSSRSNSQKPETDASSSLA) shows a compositional bias: polar residues. Phosphoserine is present on serine 929. The segment covering 936-947 (SGSSRGRYTRSS) has biased composition (low complexity). Residues 965 to 977 (RSQEQDTSFHEAN) are compositionally biased toward basic and acidic residues. Residue serine 966 is modified to Phosphoserine. Residues 980–992 (TVRNTSRFSSSTT) show a composition bias toward polar residues. The residue at position 1016 (serine 1016) is a Phosphoserine. Basic and acidic residues-rich tracts occupy residues 1035–1059 (PEPR…KSDF) and 1074–1091 (RSEE…EEGR). A compositionally biased stretch (polar residues) spans 1095 to 1106 (GRQSQYRRSTNQ). The segment covering 1107 to 1116 (QEEEEMDDEA) has biased composition (acidic residues).

It belongs to the protein-tyrosine phosphatase family. Non-receptor class dual specificity subfamily.

It is found in the cytoplasm. The protein resides in the myofibril. The protein localises to the sarcomere. In terms of biological role, may be required for myofiber maturation. The chain is Serine/threonine/tyrosine-interacting-like protein 2 (Styxl2) from Mus musculus (Mouse).